Here is an 818-residue protein sequence, read N- to C-terminus: Sodium/hydrogen exchanger 1 (818 aa).

Topologically, residues 1 to 98 (MLLWSGICGL…FPVLGIDYTH (98 aa)) are extracellular. Residues 39-76 (PSPTASTIRGSEPPRERSIGDVTTAPPELAPESRPVNH) are disordered. An N-linked (GlcNAc...) asparagine glycan is attached at Asn75. The helical transmembrane segment at 99 to 121 (VRTPFEISLWILLACLMKIGFHV) threads the bilayer. Residues 122-130 (IPTISSIVP) are Cytoplasmic-facing. The chain crosses the membrane as a helical span at residues 131–148 (ESCLLIVVGLLVGGLIKA). The Extracellular portion of the chain corresponds to 149–158 (VGETPPFLQS). Residues 159 to 176 (EVFFLFLLPPIILDAGYF) form a helical membrane-spanning segment. The Cytoplasmic portion of the chain corresponds to 177–186 (LPLRQFTENL). The helical transmembrane segment at 187 to 215 (GTILIFAVVGTLWNAFFLGGLMYAVCLVG) threads the bilayer. The Extracellular segment spans residues 216–222 (GEQINNI). The chain crosses the membrane as a helical span at residues 223-249 (GLLDNLLFGSIISAVDPVAVLAVFEEI). The Cytoplasmic portion of the chain corresponds to 250–252 (HIN). Residues 253-283 (ELLHILVFGESLLNDAVTVVLYHLFEEFANY) traverse the membrane as a helical segment. Topologically, residues 284 to 287 (DRVG) are extracellular. A helical membrane pass occupies residues 288–322 (IVDIVLGFLSFFVVSLGGVFVGVVYGVIAAFTSRF). At 323–328 (TSHIRV) the chain is on the cytoplasmic side. Residues 329 to 341 (IEPLFVFLYSYMA) form a helical membrane-spanning segment. The Extracellular segment spans residues 342–350 (YLSAELFHL). A helical membrane pass occupies residues 351-371 (SGIMALIASGVVMRPYVEANI). The Cytoplasmic segment spans residues 372–373 (SH). A helical transmembrane segment spans residues 374-404 (KSHTTIKYFLKMWSSVSETLIFIFLGVSTVA). Over 405–410 (GSHHWN) the chain is Extracellular. Residues 411 to 438 (WTFVISTLLFCLIARVLGVLGLTWFINK) form a helical membrane-spanning segment. Residues 439-444 (FRIVKL) are Cytoplasmic-facing. The chain crosses the membrane as a helical span at residues 445-469 (TPKDQFIIAYGGLRGAIAFSLGHLL). The Extracellular segment spans residues 470 to 475 (DKNHFP). Residues 476 to 505 (MCDLFLTAIITVIFFTVFVQGMTIRPLVDL) traverse the membrane as a helical segment. The tract at residues 503 to 545 (VDLLAVKKKQETKRSINEEIHTQFLDHLLTGIEDICGHYGHHH) is interaction with TESC. Over 506 to 818 (LAVKKKQETK…EGEPFIPKGQ (313 aa)) the chain is Cytoplasmic. The segment at 509–516 (KKKQETKR) is PI(4,5)P2-binding region. Positions 515–545 (KRSINEEIHTQFLDHLLTGIEDICGHYGHHH) are interaction with CHP2. The interval 540–545 (HYGHHH) is confers pH-dependent PI(4,5)P2 binding. Residues 552-560 (RFNKKYVKK) form a PI(4,5)P2-binding region region. 2 positions are modified to phosphoserine: Ser599 and Ser602. Thr603 carries the phosphothreonine modification. Ser605 and Ser648 each carry phosphoserine. Positions 633–818 (KILRNNLQKT…EGEPFIPKGQ (186 aa)) are interaction with TESC. The interval 633 to 818 (KILRNNLQKT…EGEPFIPKGQ (186 aa)) is interaction with CALM1. The interval 684-687 (LTVP) is interaction with PPP3CA. Phosphoserine is present on residues Ser693, Ser697, and Ser703. The tract at residues 715–720 (PVITID) is interaction with PPP3CA. 3 positions are modified to phosphoserine: Ser723, Ser726, and Ser729. Positions 739–818 (GKVLGLSREP…EGEPFIPKGQ (80 aa)) are disordered. Residues Thr752 and Thr782 each carry the phosphothreonine modification. The segment covering 785 to 794 (PSDSPSSQRI) has biased composition (polar residues). Phosphoserine occurs at positions 788, 790, and 799.

This sequence belongs to the monovalent cation:proton antiporter 1 (CPA1) transporter (TC 2.A.36) family. Homodimer; dimerization is crucial for its function. Oligomer. Interacts with CALM in a calcium-dependent manner. Interacts with TESC. Interacts (via the juxtamembrane region of the cytoplasmic C-terminal domain) with CHP1; the interaction occurs at the plasma membrane in a calcium-dependent manner. Interacts with CHP2; the interaction occurs in a calcium-dependent manner. Interacts with EZR; regulates the cytoskeletal interactions of SLC9A1 and promotes stress fiber formation. Ubiquitinated, leading to its degradation by the proteasome. Ubiquitination is reduced by CHP1. In terms of processing, O-glycosylated. Post-translationally, palmitoylated; may play a major role in SLC9A1 regulation. Phosphorylation at Thr-782 increases SLC9A1 activity. Specifically dephosphorylated at Thr-782 by PPP3CA that negatively regulates SLC9A1 activity. Phosphorylation at Ser-648 by AKT1 reduces SLC9A1 binding to CALM1.

It localises to the cell membrane. The protein localises to the basolateral cell membrane. The catalysed reaction is Na(+)(in) + H(+)(out) = Na(+)(out) + H(+)(in). It carries out the reaction Li(+)(out) + H(+)(in) = Li(+)(in) + H(+)(out). The enzyme catalyses Li(+)(in) + Na(+)(out) = Li(+)(out) + Na(+)(in). Its activity is regulated as follows. Activated at acidic pHs. Inhibited by cariporide and eniporide. Inhibited by amiloride and 5-amino-substituted derivatives. Phosphatidylinositol 4,5-bisphosphate (PI(4,5)P2) and phosphatidylinositol 3,4,5-trisphosphate (PI(3,4,5)P3) bind and differentially regulate SLC9A1 activity. Functionally, electroneutral Na(+) /H(+) antiporter that extrudes Na(+) in exchange for external protons driven by the inward sodium ion chemical gradient, protecting cells from acidification that occurs from metabolism. Exchanges intracellular H(+) ions for extracellular Na(+) in 1:1 stoichiometry. Plays a key role in maintening intracellular pH neutral and cell volume, and thus is important for cell growth, proliferation, migration and survival. In addition, can transport lithium Li(+) and also functions as a Na(+)/Li(+) antiporter. SLC9A1 also functions in membrane anchoring and organization of scaffolding complexes that coordinate signaling inputs. The chain is Sodium/hydrogen exchanger 1 (SLC9A1) from Sus scrofa (Pig).